Reading from the N-terminus, the 643-residue chain is Phosphatidylinositol-3,5-bisphosphate 3-phosphatase MTMR2 (643 aa).

2 stretches are compositionally biased toward polar residues: residues 1-12 (MEKSSSCESLGS) and 23-40 (DSLS…VHTK). A disordered region spans residues 1–56 (MEKSSSCESLGSQPAAARPPSVDSLSSASTSHSENSVHTKSASVVSSDSISTSADN). 2 positions are modified to phosphoserine: serine 6 and serine 9. Residues 41–55 (SASVVSSDSISTSAD) are compositionally biased toward low complexity. Serine 58 carries the phosphoserine modification. The 72-residue stretch at 68-139 (NKLAEMEEPP…GVINRVEKIG (72 aa)) folds into the GRAM domain. Residues 205 to 580 (GWKLYDPLLE…RHLELWVGYY (376 aa)) form the Myotubularin phosphatase domain. Asparagine 330, asparagine 355, and isoleucine 356 together coordinate a 1,2-diacyl-sn-glycero-3-phospho-(1D-myo-inositol-3,5-bisphosphate). Asparagine 330, asparagine 355, and isoleucine 356 together coordinate a 1,2-diacyl-sn-glycero-3-phospho-(1D-myo-inositol-3-phosphate). Cysteine 417 acts as the Phosphocysteine intermediate in catalysis. A 1,2-diacyl-sn-glycero-3-phospho-(1D-myo-inositol-3,5-bisphosphate) contacts are provided by serine 418, aspartate 419, glycine 420, tryptophan 421, aspartate 422, arginine 423, arginine 459, and arginine 463. 6 residues coordinate a 1,2-diacyl-sn-glycero-3-phospho-(1D-myo-inositol-3-phosphate): serine 418, aspartate 419, glycine 420, tryptophan 421, aspartate 422, and arginine 423. Arginine 463 is an a 1,2-diacyl-sn-glycero-3-phospho-(1D-myo-inositol-3-phosphate) binding site. A coiled-coil region spans residues 593–627 (IHNRYKELLAKRAELQKKVEELQREISNRSTSSSE). A disordered region spans residues 615–643 (QREISNRSTSSSERASSPAQCVTPVQTVV). The segment covering 620–631 (NRSTSSSERASS) has biased composition (low complexity). Polar residues predominate over residues 632 to 643 (PAQCVTPVQTVV).

Belongs to the protein-tyrosine phosphatase family. Non-receptor class myotubularin subfamily. As to quaternary structure, homodimer (via coiled-coil domain). Heterotetramer consisting of one MTMR2 dimer and one SBF2/MTMR13 dimer; specifically in peripheral nerves stabilizes SBF2/MTMR13 at the membranes and increases MTMR2 catalytic activity towards phosphatidylinositol 3,5-bisphosphate and to a lesser extent towards phosphatidylinositol 3-phosphate. Heterodimer with SBF1/MTMR5; acts as an adapter for the phosphatase MTMR2 to regulate MTMR2 catalytic activity and subcellular location. Heterodimer with MTMR12. Phosphorylation at Ser-58 decreases MTMR2 localization to endocytic vesicular structures.

It localises to the cytoplasm. Its subcellular location is the early endosome membrane. It is found in the perinuclear region. The protein resides in the cell projection. The protein localises to the axon. It localises to the endosome membrane. The enzyme catalyses a 1,2-diacyl-sn-glycero-3-phospho-(1D-myo-inositol-3,5-bisphosphate) + H2O = a 1,2-diacyl-sn-glycero-3-phospho-(1D-myo-inositol-5-phosphate) + phosphate. The catalysed reaction is a 1,2-diacyl-sn-glycero-3-phospho-(1D-myo-inositol-3-phosphate) + H2O = a 1,2-diacyl-sn-glycero-3-phospho-(1D-myo-inositol) + phosphate. It catalyses the reaction 1,2-dioctanoyl-sn-glycero-3-phospho-(1-D-myo-inositol-3-phosphate) + H2O = 1,2-dioctanoyl-sn-glycero-3-phospho-(1D-myo-inositol) + phosphate. It carries out the reaction 1,2-dioctanoyl-sn-glycero-3-phospho-(1D-myo-inositol-3,5-bisphosphate) + H2O = 1,2-dioctanoyl-sn-glycero-3-phospho-(1D-myo-inositol-5-phosphate) + phosphate. Lipid phosphatase that specifically dephosphorylates the D-3 position of phosphatidylinositol 3-phosphate and phosphatidylinositol 3,5-bisphosphate, generating phosphatidylinositol and phosphatidylinositol 5-phosphate. Regulates the level of these phosphoinositides critical for various biological processes including autophagy initiation and autophagosome maturation. The protein is Phosphatidylinositol-3,5-bisphosphate 3-phosphatase MTMR2 of Pongo abelii (Sumatran orangutan).